A 368-amino-acid chain; its full sequence is RNA polymerase sigma factor SigA (368 aa).

The sigma-70 factor domain-1 stretch occupies residues threonine 16–proline 90. The interval leucine 69–proline 90 is disordered. Residues asparagine 71 to asparagine 83 are compositionally biased toward basic and acidic residues. The segment at leucine 135–threonine 205 is sigma-70 factor domain-2. The Interaction with polymerase core subunit RpoC signature appears at aspartate 159–glutamine 162. The tract at residues glutamate 214–alanine 291 is sigma-70 factor domain-3. Residues valine 303 to histidine 356 form a sigma-70 factor domain-4 region. A DNA-binding region (H-T-H motif) is located at residues leucine 329–alanine 348.

The protein belongs to the sigma-70 factor family. RpoD/SigA subfamily. Interacts transiently with the RNA polymerase catalytic core formed by RpoA, RpoB, RpoC and RpoZ (2 alpha, 1 beta, 1 beta' and 1 omega subunit) to form the RNA polymerase holoenzyme that can initiate transcription. Interacts (via sigma-70 factor domain 4) with the phage G1 protein gp67; this inhibits rRNA synthesis. Interaction with phage G1 protein gp67 does not inhibit transcription in general, but selectively inhibits transcription from promoters that require interaction of the RNA polymerase alpha subunit with DNA sequences upstream of the -35 promoter element.

It is found in the cytoplasm. In terms of biological role, sigma factors are initiation factors that promote the attachment of RNA polymerase to specific initiation sites and are then released. This sigma factor is the primary sigma factor during exponential growth. This Staphylococcus aureus (strain NCTC 8325 / PS 47) protein is RNA polymerase sigma factor SigA.